Here is a 365-residue protein sequence, read N- to C-terminus: Bifunctional chorismate mutase/prephenate dehydratase (365 aa).

In terms of domain architecture, Chorismate mutase spans 1-96 (MSEADQLKAL…SCLALEQPLR (96 aa)). Substrate is bound by residues arginine 11, arginine 28, lysine 39, and glutamate 57. The Prephenate dehydratase domain occupies 97-272 (VAYLGPEGTF…NSTRFLIIGS (176 aa)). One can recognise an ACT domain in the interval 284-361 (SIIVSMRNKP…VALKVLGSYP (78 aa)).

The protein resides in the cytoplasm. It carries out the reaction chorismate = prephenate. It catalyses the reaction prephenate + H(+) = 3-phenylpyruvate + CO2 + H2O. Its pathway is amino-acid biosynthesis; L-phenylalanine biosynthesis; phenylpyruvate from prephenate: step 1/1. The protein operates within metabolic intermediate biosynthesis; prephenate biosynthesis; prephenate from chorismate: step 1/1. Functionally, catalyzes the Claisen rearrangement of chorismate to prephenate and the decarboxylation/dehydration of prephenate to phenylpyruvate. The sequence is that of Bifunctional chorismate mutase/prephenate dehydratase from Stutzerimonas stutzeri (Pseudomonas stutzeri).